The sequence spans 559 residues: Serine/threonine-protein kinase VRK1 (559 aa).

The Protein kinase domain occupies 32-388; sequence YIVGKQFATG…EDDDEEEEVI (357 aa). Residues 38–46 and K61 contribute to the ATP site; that span reads FATGGFGRI. The active-site Proton acceptor is D167. Disordered regions lie at residues 315–419 and 448–559; these read EAAQ…ATSD and SSCE…SSEV. 2 stretches are compositionally biased toward polar residues: residues 405-418 and 449-460; these read RSFN…TATS and SCESQYESNEPG. A compositionally biased stretch (basic and acidic residues) spans 533–542; that stretch reads TSARYQEKRA. The span at 545–559 shows a compositional bias: polar residues; sequence NTKPTFDDSSCSSEV.

This sequence belongs to the protein kinase superfamily. CK1 Ser/Thr protein kinase family. VRK subfamily. Autophosphorylates in vitro.

It is found in the nucleus. Its subcellular location is the cytoplasm. The protein localises to the cajal body. It carries out the reaction L-seryl-[protein] + ATP = O-phospho-L-seryl-[protein] + ADP + H(+). The enzyme catalyses L-threonyl-[protein] + ATP = O-phospho-L-threonyl-[protein] + ADP + H(+). In terms of biological role, serine/threonine kinase that phosphorylates baf-1, thus regulating the association of baf-1 with chromatin and nuclear membrane proteins during nuclear envelope formation. May act through the egl-17 signaling pathway. Essential in hermaphrodites for formation of the vulva, uterus, and uterine seam cells and for development and maintenance of the somatic gonad and thus the germ line. Acts to prevent cep-1 from triggering an inappropriate cell cycle arrest, thereby promoting germ cell proliferation. Regulates anchor cell polarity and the timing of anchor cell invasion through the basement membranes separating vulval and somatic gonadal cells during the L3 larval stage. This chain is Serine/threonine-protein kinase VRK1, found in Caenorhabditis briggsae.